We begin with the raw amino-acid sequence, 399 residues long: MSVMSGDEVQFQGDYDDYITYLKRRIRQLELQVRMLEADKERLERELSRLRSEMSRLRQPPAFAGTVIEVLDEDRAIVQNYNGPRFVVRIAPWIDRKKLRPGTRVALDQRTMAVVEILPTSKDPTVLGFEVIERPNVTYNDIGGLKKQLQELREAIELPLKHPELFEEVGIDPPKGVLLYGPPGCGKTLMAKALAHEVNATFIRVVGSELVRKYIGEGARLVHELFELAKEKAPTIIFIDEIDAIGAKRMDETTGGEREVNRTLMQLLAEMDGFDPRGNVKVIAATNRPDILDPALLRPGRFDRLIEVPLPDFEGRLEILKVHTRRMKLKGVDLRAIAEMTEGASGADLKAIATEAGMFAIRERRTYVTQEDFLKAVDKVLGNERKLLQQITSHEVIYG.

Residues isoleucine 19–proline 60 adopt a coiled-coil conformation. ATP is bound by residues glycine 184–leucine 189 and histidine 323. Residues isoleucine 397–glycine 399 form a docks into pockets in the proteasome alpha-ring to cause gate opening region.

It belongs to the AAA ATPase family. As to quaternary structure, homohexamer. The hexameric complex has a two-ring architecture resembling a top hat that caps the 20S proteasome core at one or both ends. Upon ATP-binding, the C-terminus of PAN interacts with the alpha-rings of the proteasome core by binding to the intersubunit pockets.

Its subcellular location is the cytoplasm. Its function is as follows. ATPase which is responsible for recognizing, binding, unfolding and translocation of substrate proteins into the archaeal 20S proteasome core particle. Is essential for opening the gate of the 20S proteasome via an interaction with its C-terminus, thereby allowing substrate entry and access to the site of proteolysis. Thus, the C-termini of the proteasomal ATPase function like a 'key in a lock' to induce gate opening and therefore regulate proteolysis. Unfolding activity requires energy from ATP hydrolysis, whereas ATP binding alone promotes ATPase-20S proteasome association which triggers gate opening, and supports translocation of unfolded substrates. This chain is Proteasome-activating nucleotidase, found in Pyrococcus horikoshii (strain ATCC 700860 / DSM 12428 / JCM 9974 / NBRC 100139 / OT-3).